A 418-amino-acid polypeptide reads, in one-letter code: Glutamyl-tRNA reductase (418 aa).

Substrate contacts are provided by residues 49-52 (TCNR), Ser-108, 113-115 (EPQ), and Gln-119. Cys-50 (nucleophile) is an active-site residue. 188–193 (GAGETI) lines the NADP(+) pocket.

Belongs to the glutamyl-tRNA reductase family. In terms of assembly, homodimer.

It catalyses the reaction (S)-4-amino-5-oxopentanoate + tRNA(Glu) + NADP(+) = L-glutamyl-tRNA(Glu) + NADPH + H(+). The protein operates within porphyrin-containing compound metabolism; protoporphyrin-IX biosynthesis; 5-aminolevulinate from L-glutamyl-tRNA(Glu): step 1/2. Its function is as follows. Catalyzes the NADPH-dependent reduction of glutamyl-tRNA(Glu) to glutamate 1-semialdehyde (GSA). The sequence is that of Glutamyl-tRNA reductase from Aliivibrio fischeri (strain ATCC 700601 / ES114) (Vibrio fischeri).